The sequence spans 476 residues: Surface membrane glycoprotein GP46/M-2 (476 aa).

Positions 1 to 32 (MAQCVRRLVLAAPLAAVVALLLCTSSAPVARA) are cleaved as a signal peptide. Tandem repeats lie at residues 107-130 (VMIL…PSWS), 131-154 (SMKH…PEWS), 155-178 (EMTS…TSWS), and 179-202 (SMPK…DSWR). The interval 107–202 (VMILALDFGA…FCGCVPDSWR (96 aa)) is 4 X 24 AA tandem repeats. Disordered stretches follow at residues 231-255 (APGT…PSPG) and 348-370 (ALSP…RRRA). A lipid anchor (GPI-anchor amidated cysteine) is attached at Cys-452. A propeptide spans 453-476 (PALFDGARLRCCALVVCAGAAPAG) (removed in mature form).

The protein localises to the cell membrane. This chain is Surface membrane glycoprotein GP46/M-2, found in Leishmania amazonensis.